Here is a 310-residue protein sequence, read N- to C-terminus: Phosphoribosylaminoimidazole-succinocarboxamide synthase (310 aa).

The protein belongs to the SAICAR synthetase family.

The catalysed reaction is 5-amino-1-(5-phospho-D-ribosyl)imidazole-4-carboxylate + L-aspartate + ATP = (2S)-2-[5-amino-1-(5-phospho-beta-D-ribosyl)imidazole-4-carboxamido]succinate + ADP + phosphate + 2 H(+). It participates in purine metabolism; IMP biosynthesis via de novo pathway; 5-amino-1-(5-phospho-D-ribosyl)imidazole-4-carboxamide from 5-amino-1-(5-phospho-D-ribosyl)imidazole-4-carboxylate: step 1/2. This Dechloromonas aromatica (strain RCB) protein is Phosphoribosylaminoimidazole-succinocarboxamide synthase.